Reading from the N-terminus, the 1665-residue chain is Cortactin-binding protein 2 (1665 aa).

5 disordered regions span residues 1 to 23 (MATD…AGAT), 201 to 235 (EEKK…SEFD), 360 to 441 (ASHG…LHPG), 455 to 480 (GNAN…PTSR), and 499 to 617 (RFTS…PKPS). Positions 120-276 (KMQERMSTQL…EQLKRGNDNK (157 aa)) form a coiled coil. Residues 385–395 (GPSTGSTADLT) are compositionally biased toward polar residues. Asymmetric dimethylarginine is present on arginine 499. Residues 584 to 594 (TVASPPSSLPQ) show a composition bias toward polar residues. ANK repeat units follow at residues 710–740 (GRPT…DINY), 744–773 (DGHS…QVDA), 777–806 (NGFT…NINH), 810–839 (GGQT…DRSI), 843–872 (DGWT…PAHG), and 914–944 (EGWT…EPER). Positions 1447–1484 (CSKKKGESGAWRKVSTSPRKKSSRFSSPTWNKPDLSEE) are disordered. A Phosphoserine modification is found at serine 1526. Residues 1544–1562 (SESDISKIADSRDDLRRFD) show a composition bias toward basic and acidic residues. The segment at 1544–1648 (SESDISKIAD…RQIEINNNSK (105 aa)) is disordered. Polar residues-rich tracts occupy residues 1564–1576 (PGNN…TVNN) and 1584–1604 (KEVS…QSKT). Low complexity predominate over residues 1626–1640 (SQNTKRSSSSSNTRQ).

Interacts with CTTN/cortactin SH3 domain. Interacts with STRN, STRN4/zinedin and MOB4/phocein; this interactions mediate the association with the STRIPAK core complex and may regulate dendritic spine distribution of the STRIPAK complex in hippocampal neurons. Activation of glutamate receptors weakens the interaction with STRN and STRN4.

It localises to the cytoplasm. The protein resides in the cell cortex. Its subcellular location is the cell projection. The protein localises to the dendritic spine. In terms of biological role, regulates the dendritic spine distribution of CTTN/cortactin in hippocampal neurons, and thus controls dendritic spinogenesis and dendritic spine maintenance. Associates with the striatin-interacting phosphatase and kinase (STRIPAK) core complex to regulate dendritic spine distribution of the STRIPAK complex in hippocampal neurons. The sequence is that of Cortactin-binding protein 2 (CTTNBP2) from Equus caballus (Horse).